A 370-amino-acid polypeptide reads, in one-letter code: Cytoplasmic envelopment protein 2 (370 aa).

Belongs to the herpesviridae cytoplasmic envelopment protein 2 family. Interacts with cytoplasmic envelopment protein 3 and with the capsid.

It localises to the virion tegument. Its subcellular location is the host cytoplasm. The protein localises to the host nucleus. In terms of biological role, plays a critical role in cytoplasmic virus egress. Participates in the final step of tegumentation and envelope acquisition within the host cytoplasm by directly interacting with the capsid. Upon virion binding to target cell, a signaling cascade is triggered to disrupt the interaction with the capsid, thereby preparing capsid uncoating. The chain is Cytoplasmic envelopment protein 2 from Equine herpesvirus 1 (strain V592) (EHV-1).